A 74-amino-acid chain; its full sequence is WAP four-disulfide core domain protein 18 (74 aa).

A signal peptide spans 1-24; that stretch reads MKTATVFVLVALIFMTMTTAWALS. In terms of domain architecture, WAP spans 26–73; the sequence is PKEKPGACPKPPPRSFGTCDERCTGDGSCSGNMKCCSNGCGHACKPPV.

It localises to the secreted. Functionally, could have proteinase inhibiting capacity. In Bos taurus (Bovine), this protein is WAP four-disulfide core domain protein 18 (WFDC18).